Reading from the N-terminus, the 194-residue chain is Imidazoleglycerol-phosphate dehydratase (194 aa).

The protein belongs to the imidazoleglycerol-phosphate dehydratase family.

The protein localises to the cytoplasm. It carries out the reaction D-erythro-1-(imidazol-4-yl)glycerol 3-phosphate = 3-(imidazol-4-yl)-2-oxopropyl phosphate + H2O. Its pathway is amino-acid biosynthesis; L-histidine biosynthesis; L-histidine from 5-phospho-alpha-D-ribose 1-diphosphate: step 6/9. The chain is Imidazoleglycerol-phosphate dehydratase from Rubrobacter xylanophilus (strain DSM 9941 / JCM 11954 / NBRC 16129 / PRD-1).